A 250-amino-acid chain; its full sequence is ATP synthase subunit a (250 aa).

6 consecutive transmembrane segments (helical) span residues 29-49 (ASLFMAASAAIAAGFLYFATS), 84-104 (FFPLVFSLFMFVLTANLLGMF), 114-134 (IIVTAALAILVIGTVVVYGFY), 143-163 (VFVPSGVPGILLPLVVTIEII), 193-213 (FVASLGALGAVGVGGAVLPLI), and 216-236 (VALTGLEFLVAFLQAYVFAVL).

Belongs to the ATPase A chain family. In terms of assembly, F-type ATPases have 2 components, CF(1) - the catalytic core - and CF(0) - the membrane proton channel. CF(1) has five subunits: alpha(3), beta(3), gamma(1), delta(1), epsilon(1). CF(0) has three main subunits: a(1), b(2) and c(9-12). The alpha and beta chains form an alternating ring which encloses part of the gamma chain. CF(1) is attached to CF(0) by a central stalk formed by the gamma and epsilon chains, while a peripheral stalk is formed by the delta and b chains.

The protein localises to the cell inner membrane. Its function is as follows. Key component of the proton channel; it plays a direct role in the translocation of protons across the membrane. The sequence is that of ATP synthase subunit a from Rhizobium johnstonii (strain DSM 114642 / LMG 32736 / 3841) (Rhizobium leguminosarum bv. viciae).